Here is a 137-residue protein sequence, read N- to C-terminus: Peptide methionine sulfoxide reductase MsrB (137 aa).

One can recognise a MsrB domain in the interval 7–129; sequence AEELKKNLSE…NSASLRFTDG (123 aa). Zn(2+)-binding residues include cysteine 46, cysteine 49, cysteine 95, and cysteine 98. Cysteine 118 acts as the Nucleophile in catalysis.

It belongs to the MsrB Met sulfoxide reductase family. It depends on Zn(2+) as a cofactor.

It catalyses the reaction L-methionyl-[protein] + [thioredoxin]-disulfide + H2O = L-methionyl-(R)-S-oxide-[protein] + [thioredoxin]-dithiol. This is Peptide methionine sulfoxide reductase MsrB from Escherichia coli O45:K1 (strain S88 / ExPEC).